We begin with the raw amino-acid sequence, 437 residues long: Eukaryotic peptide chain release factor subunit 1 (437 aa).

The short motif at 61-64 is the NIKS motif; plays an important role in translational termination element; it reads NIKS.

This sequence belongs to the eukaryotic release factor 1 family. Component of the eRF1-eRF3-GTP ternary complex, composed of ETF1/ERF1 and eRF3 (GSPT1/ERF3A or GSPT2/ERF3B) and GTP.

The protein resides in the cytoplasm. In terms of biological role, component of the eRF1-eRF3-GTP ternary complex, a ternary complex that mediates translation termination in response to the termination codons. The eRF1-eRF3-GTP complex binds to a stop codon in the ribosomal A-site. ETF1/ERF1 is responsible for stop codon recognition and inducing hydrolysis of peptidyl-tRNA. Following GTP hydrolysis, eRF3 (GSPT1/ERF3A or GSPT2/ERF3B) dissociates, permitting ETF1/eRF1 to accommodate fully in the A-site, followed by hydrolysis of peptidyl-tRNA. The sequence is that of Eukaryotic peptide chain release factor subunit 1 (etf1) from Xenopus tropicalis (Western clawed frog).